Reading from the N-terminus, the 325-residue chain is ATP phosphoribosyltransferase (325 aa).

The protein belongs to the ATP phosphoribosyltransferase family. Long subfamily. Mg(2+) is required as a cofactor.

The protein resides in the cytoplasm. It carries out the reaction 1-(5-phospho-beta-D-ribosyl)-ATP + diphosphate = 5-phospho-alpha-D-ribose 1-diphosphate + ATP. It participates in amino-acid biosynthesis; L-histidine biosynthesis; L-histidine from 5-phospho-alpha-D-ribose 1-diphosphate: step 1/9. Feedback inhibited by histidine. Catalyzes the condensation of ATP and 5-phosphoribose 1-diphosphate to form N'-(5'-phosphoribosyl)-ATP (PR-ATP). Has a crucial role in the pathway because the rate of histidine biosynthesis seems to be controlled primarily by regulation of HisG enzymatic activity. In Afipia carboxidovorans (strain ATCC 49405 / DSM 1227 / KCTC 32145 / OM5) (Oligotropha carboxidovorans), this protein is ATP phosphoribosyltransferase.